We begin with the raw amino-acid sequence, 289 residues long: MKRILSIQSHVVFGCAGNSAAVFPMRRMGMEVWPINTVQFSNHTQYQQGWKGIAMPAGHISELVDGLSAIEATQVCDAVLSGYLGSAAQGQEIVTAVNKIKQDNPNAIYFCDPVMGHPEKGCIVAPEVETFFKESALSSADIIAPNLLELESLTGMTINTLDQVIEANNQLLEKGVKMVVVKHLSRAGIQKDRFEMLLTTEDGSYHVSRPLYDFDAKRQPVGAGDLISGVMLANLMAGYSPIDAFERTNAAVDSVMQETFNRGAYELQLIASQERFNAPEIIVKAEKVA.

Substrate-binding positions include serine 9 and threonine 44–glutamine 45. ATP contacts are provided by aspartate 112, alanine 144, glutamate 149, and lysine 182. Substrate is bound at residue aspartate 225.

The protein belongs to the pyridoxine kinase family. PdxY subfamily. As to quaternary structure, homodimer. Requires Mg(2+) as cofactor.

It catalyses the reaction pyridoxal + ATP = pyridoxal 5'-phosphate + ADP + H(+). Its pathway is cofactor metabolism; pyridoxal 5'-phosphate salvage; pyridoxal 5'-phosphate from pyridoxal: step 1/1. Its function is as follows. Pyridoxal kinase involved in the salvage pathway of pyridoxal 5'-phosphate (PLP). Catalyzes the phosphorylation of pyridoxal to PLP. The chain is Pyridoxal kinase PdxY from Aliivibrio fischeri (strain ATCC 700601 / ES114) (Vibrio fischeri).